We begin with the raw amino-acid sequence, 60 residues long: Protein YoaG (60 aa).

In terms of assembly, homodimer.

This Escherichia coli O157:H7 protein is Protein YoaG (yoaG).